The chain runs to 544 residues: GDP-mannose 4,6-dehydratase sdnI (544 aa).

Residues 16–21, R41, 64–65, and 86–90 contribute to the NADP(+) site; these read GITGQD, DM, and LAAQS. S90 is a substrate binding site. Catalysis depends on nucleophile residues E135 and Y157. Y157 contributes to the substrate binding site. K161 is an NADP(+) binding site. Position 186 (N186) interacts with substrate. Residues H187 and R192 each coordinate NADP(+). Substrate contacts are provided by residues 192–200, G219, R225, and 303–306; these read RGTTFVTRK and RPVE. Residues 366 to 406 form a disordered region; sequence GETTSAVNSSPSSTAGDTYKASDGWSTSGAEGSEQTECSSV. 2 stretches are compositionally biased toward polar residues: residues 368–381 and 389–404; these read TTSA…STAG and GWST…TECS.

It belongs to the NAD(P)-dependent epimerase/dehydratase family. GDP-mannose 4,6-dehydratase subfamily. NADP(+) is required as a cofactor.

The enzyme catalyses GDP-alpha-D-mannose = GDP-4-dehydro-alpha-D-rhamnose + H2O. It functions in the pathway antibiotic biosynthesis. Functionally, GDP-mannose 4,6-dehydratase; part of the gene cluster that mediates the biosynthesis of sordarin and hypoxysordarin, glycoside antibiotics with a unique tetracyclic diterpene aglycone structure. First, the geranylgeranyl diphosphate synthase sdnC constructs GGDP from farnesyl diphosphate and isopentenyl diphosphate. The diterpene cyclase sdnA then catalyzes the cyclization of GGDP to afford cycloaraneosene. Cycloaraneosene is then hydroxylated four times by the putative cytochrome P450 monooxygenases sdnB, sdnE, sdnF and sdnH to give a hydroxylated cycloaraneosene derivative such as cycloaraneosene-8,9,13,19-tetraol. Although the order of the hydroxylations is unclear, at least C8, C9 and C13 of the cycloaraneosene skeleton are hydroxylated before the sordaricin formation. Dehydration of the 13-hydroxy group of the hydroxylated cycloaraneosene derivative might be catalyzed by an unassigned hypothetical protein such as sdnG and sdnP to construct the cyclopentadiene moiety. The FAD-dependent oxidoreductase sdnN is proposed to catalyze the oxidation at C9 of the hydroxylated cycloaraneosene derivative and also catalyze the Baeyer-Villiger oxidation to give the lactone intermediate. The presumed lactone intermediate would be hydrolyzed to give an acrolein moiety and a carboxylate moiety. Then, [4+2]cycloaddition would occur between the acrolein moiety and the cyclopentadiene moiety to give sordaricin. SdnN might also be involved in the [4+2]cycloaddition after the hypothesized oxidation to accommodate the oxidized product and prompt the [4+2]cycloaddition. GDP-6-deoxy-D-altrose may be biosynthesized from GDP-D-mannose by the putative GDP-mannose-4,6-dehydratase sdnI and the short-chain dehydrogenase sdnK. The glycosyltransferase sdnJ catalyzes the attachment of 6-deoxy-D-altrose onto the 19-hydroxy group of sordaricin to give 4'-O-demethylsordarin. The methyltransferase sdnD would complete the biosynthesis of sordarin. Sordarin can be further modified into hypoxysordarin. The unique acyl chain at the 3'-hydroxy group of hypoxysordarin would be constructed by an iterative type I PKS sdnO and the trans-acting polyketide methyltransferase sdnL. SdnL would be responsible for the introduction of an alpha-methyl group of the polyketide chain. Alternatively, the beta-lactamase-like protein sdnR might be responsible for the cleavage and transfer of the polyketide chain from the PKS sdnO to sordarin. Two putative cytochrome P450 monooxygenases, sdnQ and sdnT, might catalyze the epoxidations of the polyketide chain to complete the biosynthesis of hypoxysordarin. Transcriptional regulators sdnM and sdnS are presumably encoded for the transcriptional regulation of the expression of the sdn gene cluster. This is GDP-mannose 4,6-dehydratase sdnI from Sordaria araneosa (Pleurage araneosa).